A 698-amino-acid chain; its full sequence is SPX domain-containing membrane protein OsI_21475 (698 aa).

Residues 2–145 (VNFGKKLMAD…GYRFTDYYVT (144 aa)) enclose the SPX domain. A run of 6 helical transmembrane segments spans residues 248–268 (FMSL…TYII), 279–299 (LGAA…AQIF), 316–336 (LIFS…AYDM), 339–357 (LTVL…ARAV), 376–396 (AGFV…AGLL), and 412–432 (LPGW…WISF). The disordered stretch occupies residues 467–495 (LLRDSSKKDEDDDEEVDDSEEGTHDSRKP). Residues 476-486 (EDDDEEVDDSE) are compositionally biased toward acidic residues. 5 helical membrane-spanning segments follow: residues 514–534 (LLIY…SSVI), 545–565 (AVAI…AVVG), 577–597 (LLMV…KITS), 605–625 (VVSA…NLSL), and 671–691 (LLNV…ASTF).

Belongs to the major facilitator superfamily.

The protein resides in the membrane. The polypeptide is SPX domain-containing membrane protein OsI_21475 (Oryza sativa subsp. indica (Rice)).